Consider the following 430-residue polypeptide: Histidine--tRNA ligase (430 aa).

This sequence belongs to the class-II aminoacyl-tRNA synthetase family. Homodimer.

The protein resides in the cytoplasm. It carries out the reaction tRNA(His) + L-histidine + ATP = L-histidyl-tRNA(His) + AMP + diphosphate + H(+). This is Histidine--tRNA ligase from Lactococcus lactis subsp. cremoris (strain SK11).